Here is a 180-residue protein sequence, read N- to C-terminus: ATP-dependent protease subunit HslV (180 aa).

Residue Thr-5 is part of the active site. Positions 165, 168, and 171 each coordinate Na(+).

Belongs to the peptidase T1B family. HslV subfamily. In terms of assembly, a double ring-shaped homohexamer of HslV is capped on each side by a ring-shaped HslU homohexamer. The assembly of the HslU/HslV complex is dependent on binding of ATP.

It localises to the cytoplasm. It carries out the reaction ATP-dependent cleavage of peptide bonds with broad specificity.. Its activity is regulated as follows. Allosterically activated by HslU binding. Its function is as follows. Protease subunit of a proteasome-like degradation complex believed to be a general protein degrading machinery. This is ATP-dependent protease subunit HslV from Helicobacter pylori (strain G27).